The chain runs to 212 residues: MAKNKDDEESYCGGGGYWDMVEDLEEEICFDAQEVIPNLYIGSISAATCTTSLKEHKITHILSISTNPPKIKEFTTLCINIEDESQKDISSYFQQCHGFIENGRKLGGILVHCSAGVSRSASVVISYLMSVFFKPFWYCMQYLRNIRPCIQPNTGFINQLINYEATILKNQNVISTTTTTTTTTTITKKKLISNDCNNDDNSSGGSGGGMES.

The Tyrosine-protein phosphatase domain occupies 30–169; sequence FDAQEVIPNL…LINYEATILK (140 aa). Cysteine 113 acts as the Phosphocysteine intermediate in catalysis.

This sequence belongs to the protein-tyrosine phosphatase family. Non-receptor class dual specificity subfamily.

It catalyses the reaction O-phospho-L-tyrosyl-[protein] + H2O = L-tyrosyl-[protein] + phosphate. It carries out the reaction O-phospho-L-seryl-[protein] + H2O = L-seryl-[protein] + phosphate. The catalysed reaction is O-phospho-L-threonyl-[protein] + H2O = L-threonyl-[protein] + phosphate. Functionally, has a dual specificity toward Ser/Thr and Tyr-containing proteins. The polypeptide is Probable dual specificity protein phosphatase DDB_G0269404 (Dictyostelium discoideum (Social amoeba)).